Here is a 249-residue protein sequence, read N- to C-terminus: Small ribosomal subunit protein uS3y (249 aa).

Positions 21 to 92 constitute a KH type-2 domain; it reads LNEVLTRELA…SVELYAEKVN (72 aa). Phosphoserine is present on S212.

Belongs to the universal ribosomal protein uS3 family.

The protein is Small ribosomal subunit protein uS3y (RPS3B) of Arabidopsis thaliana (Mouse-ear cress).